The primary structure comprises 448 residues: Maintenance of mitochondrial morphology protein 1 (448 aa).

Residues 1-74 are Lumenal-facing; the sequence is MTESVIYSGT…LNHTWSFTQG (74 aa). Residues 75–95 traverse the membrane as a helical segment; sequence LVVGQLSVIVVVAIFIKFFVF. The Cytoplasmic segment spans residues 96 to 448; the sequence is ADSSATTTTT…IVDKTEEASI (353 aa). 2 disordered regions span residues 119–144 and 303–357; these read RNKNVRGTSNEDKDPNNNKEDDLNSP and LQNV…SQED. Positions 127-140 are enriched in basic and acidic residues; sequence SNEDKDPNNNKEDD. The SMP-LTD domain maps to 164 to 419; it reads SPESLDWFNV…EPRFQVVKVP (256 aa). Low complexity predominate over residues 313–332; that stretch reads PSNEPNSQNQTQQPTPVNNS. Over residues 345 to 356 the composition is skewed to basic and acidic residues; sequence ETKHSKAKRSQE.

The protein belongs to the MMM1 family. Homodimer. Component of the ER-mitochondria encounter structure (ERMES) or MDM complex, composed of MMM1, MDM10, MDM12 and MDM34. An MMM1 homodimer associates with one molecule of MDM12 on each side in a pairwise head-to-tail manner, and the SMP-LTD domains of MMM1 and MDM12 generate a continuous hydrophobic tunnel for phospholipid trafficking.

The protein localises to the endoplasmic reticulum membrane. Its function is as follows. Component of the ERMES/MDM complex, which serves as a molecular tether to connect the endoplasmic reticulum (ER) and mitochondria. Components of this complex are involved in the control of mitochondrial shape and protein biogenesis, and function in nonvesicular lipid trafficking between the ER and mitochondria. The MDM12-MMM1 subcomplex functions in the major beta-barrel assembly pathway that is responsible for biogenesis of all outer membrane beta-barrel proteins, and acts in a late step after the SAM complex. The MDM10-MDM12-MMM1 subcomplex further acts in the TOM40-specific pathway after the action of the MDM12-MMM1 complex. Essential for establishing and maintaining the structure of mitochondria and maintenance of mtDNA nucleoids. This Debaryomyces hansenii (strain ATCC 36239 / CBS 767 / BCRC 21394 / JCM 1990 / NBRC 0083 / IGC 2968) (Yeast) protein is Maintenance of mitochondrial morphology protein 1.